The primary structure comprises 414 residues: MSKKIHGGSVVEMQGDEMTRIIWELIKEKLILPYVELDLHSYDLGIENRDATNDQVTKDAAEAIKKYNVGVKCATITPDEKRVEEFKLKQMWKSPNGTIRNILGGTVFREAIICKNIPRLVTGWVKPIIIGRHAYGDQYRATDFVVPGPGKVEITYTPKDGSQKVTYLVHSFEEGGGVAMGMYNQDKSIEDFAHSSFQMALSKGWPLYLSTKNTILKKYDGRFKDIFQEIYDKQYKSQFEAQKIWYEHRLIDDMVAQAMKSEGGFIWACKNYDGDVQSDSVAQGYGSLGMMTSVLICPDGKTVEAEAAHGTVTRHYRMHQKGQETSTNPIASIFAWSRGLAHRARLDNNTELSFFAKALEEVCIETIEAGFMTKDLAACIKGLPNVQRSDYLNTFEFMDKLGENLKAKLAQAKL.

The residue at position 2 (S2) is an N-acetylserine. Phosphotyrosine is present on Y42. 75–77 lines the NADP(+) pocket; sequence TIT. Position 77 (T77) interacts with substrate. K81 carries the post-translational modification N6-acetyllysine. Position 82 (R82) interacts with NADP(+). Substrate-binding positions include 94–100 and R109; that span reads SPNGTIR. K126 is subject to N6-succinyllysine. Substrate-binding residues include R132 and K212. An N6-acetyllysine mark is found at K224, K233, and K243. D252 lines the Mn(2+) pocket. An NADP(+)-binding site is contributed by K260. 2 residues coordinate Mn(2+): D275 and D279. 310 to 315 lines the NADP(+) pocket; the sequence is GTVTRH. K321 carries the N6-acetyllysine modification. Residue N328 coordinates NADP(+). S389 bears the Phosphoserine mark. The residue at position 400 (K400) is an N6-succinyllysine.

Belongs to the isocitrate and isopropylmalate dehydrogenases family. As to quaternary structure, homodimer. Mg(2+) serves as cofactor. Requires Mn(2+) as cofactor. Post-translationally, acetylation at Lys-374 dramatically reduces catalytic activity.

The protein resides in the cytoplasm. It localises to the cytosol. The catalysed reaction is D-threo-isocitrate + NADP(+) = 2-oxoglutarate + CO2 + NADPH. In terms of biological role, catalyzes the NADP(+)-dependent oxidative decarboxylation of isocitrate (D-threo-isocitrate) to 2-ketoglutarate (2-oxoglutarate), which is required by other enzymes such as the phytanoyl-CoA dioxygenase. Plays a critical role in the generation of NADPH, an important cofactor in many biosynthesis pathways. May act as a corneal epithelial crystallin and may be involved in maintaining corneal epithelial transparency. The polypeptide is Isocitrate dehydrogenase [NADP] cytoplasmic (IDH1) (Microtus ochrogaster (Prairie vole)).